Consider the following 470-residue polypeptide: MGNREPLAAAGQGTAYSGYRLRDLQNVAPTNLEILRTGPGTPMGEYMRRYWQPVCLSQELTDVPKAIRILHEDLVAFRDRRGNVGVLHRKCAHRGASLEFGIVQERGIRCCYHGWHFDVDGSLLEAPAEPPDTKLKETVCQGAYPAFERNGLVFAYMGPADRRPEFPVFDGYVLPKGTRLIPFSNVFDCNWLQVYENQIDHYHTALLHNNMTVAGVDAKLADGATLQGGFGEMPIIDWHPTDDNNGMIFTAGRRLSDDEVWIRISQMGLPNWMQNAAIVAAAPQRHSGPAMSRWQVPVDDEHSIAFGWRHFNDEVDPEHRGREEECGVDKIDFLIGQTRHRPYEETQRVPGDYEAIVSQGPIALHGLEHPGRSDVGVYMCRSLLRDAVAGKAPPDPVRVKAGSTDGQTLPRYASDSRLRIRRRPSREADSDVIRKAAHQVFAIMKECDELPVVQRRPHVLRRLDEIEASL.

One can recognise a Rieske domain in the interval 51–155 (WQPVCLSQEL…AFERNGLVFA (105 aa)). [2Fe-2S] cluster-binding residues include Cys91, His93, Cys110, and His113.

Belongs to the bacterial ring-hydroxylating dioxygenase alpha subunit family. As to quaternary structure, this two-component enzyme is composed of an oxygenase (MdpJ) and a reductase (MdpK). Requires [2Fe-2S] cluster as cofactor.

It carries out the reaction tert-butanol + NADPH + O2 + H(+) = 2-methylpropane-1,2-diol + NADP(+) + H2O. It catalyses the reaction 2-methylbutan-2-ol + NADPH + O2 + H(+) = 3-hydroxy-3-methylbut-1-ene + NADP(+) + 2 H2O. Functionally, oxygenase component of a two-component system involved in the degradation of tertiary alcohols such as tert-butyl alcohol (TBA) and tert-amyl alcohol (TAA). In the presence of TBA, catalyzes the hydroxylation of TBA to 2-methylpropane-1,2-diol. In the presence of TAA, functions as a desaturase, enabling the degradation of TAA and resulting in the formation of the hemiterpene 3-hydroxy-3-methylbut-1-ene. The specificity of the catalysis depends strongly on the molecule structure of the substrate, allowing either hydroxylation or desaturation reactions. Also catalyzes the desaturation of the tertiary alcohol 3-methyl-3-pentanol (a C6 homolog of TBA and TAA) to 3-methyl-1-penten-3-ol, with lower efficiency. In addition, can transform some secondary alcohols, including the hydroxylation of 2-propanol to 1,2-propanediol, and the desaturation of 2-butanol, 3-methyl-2-butanol and 3-pentanol. The chain is Tert-butanol monooxygenase / tert-amyl alcohol desaturase oxygenase subunit from Aquincola tertiaricarbonis.